We begin with the raw amino-acid sequence, 567 residues long: Thiol:disulfide interchange protein DsbD (567 aa).

The signal sequence occupies residues 1–19 (MAQRIFTLILLLCSTSAFA). 2 disulfides stabilise this stretch: Cys-122–Cys-128 and Cys-185–Cys-307. Transmembrane regions (helical) follow at residues 170–192 (ALWA…MYPL), 212–234 (LAFI…VAAA), 246–268 (YVLI…LFTL), 297–319 (GAIA…LLYI), 326–348 (WLGG…LVTV), 358–380 (GPWM…VFLL), and 387–409 (AWGL…ITSL). The 133-residue stretch at 435–567 (QDWAFGSPSA…FSAHLHDRQP (133 aa)) folds into the Thioredoxin domain. A disulfide bridge links Cys-482 with Cys-485.

This sequence belongs to the thioredoxin family. DsbD subfamily.

The protein resides in the cell inner membrane. The enzyme catalyses [protein]-dithiol + NAD(+) = [protein]-disulfide + NADH + H(+). It catalyses the reaction [protein]-dithiol + NADP(+) = [protein]-disulfide + NADPH + H(+). Functionally, required to facilitate the formation of correct disulfide bonds in some periplasmic proteins and for the assembly of the periplasmic c-type cytochromes. Acts by transferring electrons from cytoplasmic thioredoxin to the periplasm. This transfer involves a cascade of disulfide bond formation and reduction steps. This Salmonella typhi protein is Thiol:disulfide interchange protein DsbD.